Reading from the N-terminus, the 227-residue chain is Rho-related GTP-binding protein RhoN (227 aa).

14–21 contacts GTP; sequence GDAECGKT. Residues 36–44 carry the Effector region motif; the sequence is YVPTVFENY. GTP contacts are provided by residues 61 to 65 and 119 to 122; these read DTSGS and CKLD. Residues 186-227 form a disordered region; sequence HRQLRRTDSRRGLQRSTQLSGRPDRGNEGEMHKDRAKSCNLM. The span at 207 to 227 shows a compositional bias: basic and acidic residues; it reads RPDRGNEGEMHKDRAKSCNLM. Cys224 is subject to Cysteine methyl ester. Cys224 carries the S-geranylgeranyl cysteine lipid modification. The propeptide at 225-227 is removed in mature form; that stretch reads NLM.

This sequence belongs to the small GTPase superfamily. Rho family. In terms of assembly, interacts with the Rho-GAP domain of RACGAP1. Interacts with UBXD5. Interacts with PRAG1. Expressed specifically in neurons in the brain and spinal cord and also in hepatic stellate cells.

Its subcellular location is the cytoplasmic vesicle. The protein localises to the secretory vesicle. It is found in the acrosome membrane. May be specifically involved in neuronal and hepatic functions. Is a C3 toxin-insensitive member of the Rho subfamily. The chain is Rho-related GTP-binding protein RhoN (Rnd2) from Mus musculus (Mouse).